The following is a 1076-amino-acid chain: Envelopment polyprotein (1076 aa).

Residues 1–18 form the signal peptide; sequence MIVPIVLFLTLCPSELSA. Residues 19-455 lie on the Lumenal side of the membrane; it reads WGSPGDPIVC…NPQCYPVKKW (437 aa). 9 disulfide bridges follow: Cys-28–Cys-51, Cys-145–Cys-158, Cys-182–Cys-329, Cys-208–Cys-218, Cys-260–Cys-307, Cys-289–Cys-294, Cys-351–Cys-354, Cys-358–Cys-426, and Cys-378–Cys-383. Residues 456-476 form a helical membrane-spanning segment; the sequence is LFLVVVIMCCYCALMLLTNIL. The tract at residues 477-523 is golgi retention signal; that stretch reads RAIGVWGTWVFAPIKLALALGLRLAKLSKKGLVAVVTRGQMIVNDEL. Residues 477 to 539 lie on the Cytoplasmic side of the membrane; sequence RAIGVWGTWV…RGEQNEGRQG (63 aa). The tract at residues 544–566 is internal signal sequence for glycoprotein C; it reads GPIRHWLYSPALILILTTSICSG. 10 disulfide bridges follow: Cys-567–Cys-608, Cys-580–Cys-590, Cys-633–Cys-729, Cys-648–Cys-845, Cys-654–Cys-702, Cys-660–Cys-709, Cys-664–Cys-691, Cys-695–Cys-700, Cys-782–Cys-797, and Cys-813–Cys-827. The Lumenal portion of the chain corresponds to 567–1040; it reads CDELVHAESK…ALFGDGITRW (474 aa). Residues 654-660 form a fusion loop region; the sequence is CRWAGDC. The interval 695 to 709 is fusion loop; it reads CGGAACGCFNAAPSC. N-linked (GlcNAc...) asparagine; by host glycosylation is found at Asn-857 and Asn-918. 2 disulfide bridges follow: Cys-912-Cys-982 and Cys-922-Cys-925. N-linked (GlcNAc...) asparagine; by host glycosylation is present at Asn-940. The helical transmembrane segment at 1041–1061 threads the bilayer; sequence ILGIIGVLLACVMLFVVVVAI. At 1062–1076 the chain is on the cytoplasmic side; it reads TRRLIKGLTQRAKVA.

It belongs to the phlebovirus envelope glycoprotein family. In terms of assembly, heterodimer with glycoprotein C. Heterodimer with glycoprotein N. Homotrimer (postfusion). Post-translationally, specific enzymatic cleavages in vivo yield mature proteins Glycoprotein C, and Glycoprotein N. Glycosylated. In terms of processing, palmitoylated.

The protein localises to the virion membrane. It is found in the host Golgi apparatus membrane. The protein resides in the host endoplasmic reticulum membrane. Functionally, structural component of the virion that interacts with glycoprotein C. It shields the hydrophobic fusion loops of the glycoprotein C, preventing premature fusion. The glycoprotein protrusions are arranged on an icosahedral lattice, with T=12 triangulation. They are able to attach the virion to the host cell receptor CD209/DC-SIGN and to promote fusion of membranes with the late endosome after endocytosis of the virion. Plays a role in the packaging of ribonucleoproteins during virus assembly. Structural component of the virion that interacts with glycoprotein N. Acts as a class II fusion protein that is activated upon acidification and subsequent repositioning of the glycoprotein N. The glycoprotein protrusions are arranged on an icosahedral lattice, with T=12 triangulation. They are able to attach the virion to the host cell receptor CD209/DC-SIGN and to promote fusion of membranes with the late endosome after endocytosis of the virion. The protein is Envelopment polyprotein (GP) of Alces americanus (American moose).